The sequence spans 347 residues: Eukaryotic translation initiation factor 3 subunit I (347 aa).

5 WD repeats span residues Gly8 to Thr47, Gly50 to Thr89, Thr149 to Asp190, Leu194 to Lys233, and Gly291 to Lys330. Ser302 is modified (phosphoserine).

This sequence belongs to the eIF-3 subunit I family. In terms of assembly, component of the eukaryotic translation initiation factor 3 (eIF-3) complex.

The protein localises to the cytoplasm. Component of the eukaryotic translation initiation factor 3 (eIF-3) complex, which is involved in protein synthesis of a specialized repertoire of mRNAs and, together with other initiation factors, stimulates binding of mRNA and methionyl-tRNAi to the 40S ribosome. The eIF-3 complex specifically targets and initiates translation of a subset of mRNAs involved in cell proliferation. This Saccharomyces cerevisiae (strain YJM789) (Baker's yeast) protein is Eukaryotic translation initiation factor 3 subunit I.